The following is an 84-amino-acid chain: Exendin-2-long (84 aa).

An N-terminal signal peptide occupies residues 1–23 (MKSILWLCVFGLLIATLFPVSWQ). Residues 24–44 (MAIKSRLSSEDSETDQRLFES) constitute a propeptide that is removed on maturation.

This sequence belongs to the glucagon family. Post-translationally, an amidated Pro-81 is described. Such an amidation is however not compatible with the sequence displayed. Indeed cDNAs do not encode a Gly that could serve as substrate for peptide alpha-amidation. As to expression, expressed by the venom gland. Not expressed in the pancreas, liver, stomach, small intestine, lung, heart, kidney, spleen, ovary, and brain.

Its subcellular location is the secreted. Its function is as follows. Has vasoactive intestinal peptide(VIP)/secretin-like biological activity. Interacts with rat and human VIP receptors 1 (VIPR1) and 2 (VIPR2), with the highest affinity for the human VIPR2. Induces hypotension that is mediated by relaxation of cardiac smooth muscle. This vasodilation may not be transduced by VIP or PACAP receptors. The sequence is that of Exendin-2-long from Heloderma suspectum (Gila monster).